The sequence spans 372 residues: Peptidyl-prolyl cis-trans isomerase D (372 aa).

The PPIase cyclophilin-type domain maps to 10-173 (FFDIQIGQQQ…TDVTIAECGE (164 aa)). The segment at 174-193 (LTGEDYDNADKQTPDATGDP) is disordered. TPR repeat units lie at residues 215 to 248 (ASELKNFGNTAFKNGNIALGLEKYQKGLRYLNEF), 268 to 304 (FTLHSNSSLLANKLGQFKNGKTWATYALDVADAASAK), and 309 to 342 (AKVYYRRAVAESGLKEEDEALKDLEQASTLAPSD).

This sequence belongs to the cyclophilin-type PPIase family. PPIase D subfamily.

It is found in the cytoplasm. The enzyme catalyses [protein]-peptidylproline (omega=180) = [protein]-peptidylproline (omega=0). Its function is as follows. PPIases accelerate the folding of proteins. It catalyzes the cis-trans isomerization of proline imidic peptide bonds in oligopeptides. The sequence is that of Peptidyl-prolyl cis-trans isomerase D (cpr6) from Emericella nidulans (strain FGSC A4 / ATCC 38163 / CBS 112.46 / NRRL 194 / M139) (Aspergillus nidulans).